A 461-amino-acid chain; its full sequence is CBL-interacting protein kinase 1 (461 aa).

A Protein kinase domain is found at 19-274 (YEIGRTLGEG…IAGIKEHEWF (256 aa)). ATP-binding positions include 25–33 (LGEGNFGKV) and lysine 48. The active-site Proton acceptor is aspartate 142. The tract at residues 160–189 (DFGLSALPQHLGNDGLLHTTCGSPNYIAPE) is activation loop. Residues 308 to 332 (EKPTHINAFQLIGMASALDLSGFFE) form the NAF domain. The PPI stretch occupies residues 338–367 (QRKIRFTSTHSPKDLFDKIENVVTEMGFQV).

This sequence belongs to the protein kinase superfamily. CAMK Ser/Thr protein kinase family. SNF1 subfamily. Requires Mn(2+) as cofactor.

The catalysed reaction is L-seryl-[protein] + ATP = O-phospho-L-seryl-[protein] + ADP + H(+). The enzyme catalyses L-threonyl-[protein] + ATP = O-phospho-L-threonyl-[protein] + ADP + H(+). Functionally, CIPK serine-threonine protein kinases interact with CBL proteins. Binding of a CBL protein to the regulatory NAF domain of CIPK protein lead to the activation of the kinase in a calcium-dependent manner. This chain is CBL-interacting protein kinase 1 (CIPK1), found in Oryza sativa subsp. japonica (Rice).